The sequence spans 592 residues: MRTPTTILLLVGAILFSGAGYVRSDASDHRYKEGDTVPLYANKVGPFHNPSETYRYFDLPFCIPEGVKEKKEALGEVLNGDRLVSAPYKLNFRDEKESEVYCNKKLSKEEVKQFRKAVEKDYYFQMYYDDLPIWGFIGKVDKDIKSDPSEFKYFLYKHIQFEILYNKDRVIEISARMDPHSLVDLTEDKEVDAEFMYTVKWKETETPFEKRMEKYSMSSSLPHHLEIHWFSIINSCVTVLLLTGFLATILMRVLKNDFMKYAQDEEAADDQEETGWKYIHGDVFRFPTHNSLFAASLGSGTQLFTLTIFIFMLALVGVFYPYNRGALFTALVVIYALTSGIAGYTSASFYCQLEGKSWVRNLLLTGCLFCGPLFLTFCFLNTVAITYTATAALPFGTIVVIVLIWTLVTSPLLVLGGIAGKNSKAEFQAPCRTTKYPREIPPLPWYRSAIPQMAMAGFLPFSAIYIELYYIFASVWGHRIYTIYSILFIVFIILIIVTAFITVALTYFQLAAEDHQWWWRSFLCGGSTGLFIYAYCLYYYYARSDMSGFMQTSFFFGYMACICYGFFLMLGTVGFRAALLFVRHIYRSIKCE.

The first 24 residues, 1–24 (MRTPTTILLLVGAILFSGAGYVRS), serve as a signal peptide directing secretion. Topologically, residues 25-229 (DASDHRYKEG…SLPHHLEIHW (205 aa)) are lumenal. The chain crosses the membrane as a helical span at residues 230 to 250 (FSIINSCVTVLLLTGFLATIL). Residues 251-302 (MRVLKNDFMKYAQDEEAADDQEETGWKYIHGDVFRFPTHNSLFAASLGSGTQ) lie on the Cytoplasmic side of the membrane. Residues 303–323 (LFTLTIFIFMLALVGVFYPYN) traverse the membrane as a helical segment. Arg-324 is a topological domain (lumenal). The chain crosses the membrane as a helical span at residues 325-345 (GALFTALVVIYALTSGIAGYT). Residues 346-362 (SASFYCQLEGKSWVRNL) lie on the Cytoplasmic side of the membrane. Residues 363 to 383 (LLTGCLFCGPLFLTFCFLNTV) traverse the membrane as a helical segment. Over 384-397 (AITYTATAALPFGT) the chain is Lumenal. The chain crosses the membrane as a helical span at residues 398-418 (IVVIVLIWTLVTSPLLVLGGI). The Cytoplasmic segment spans residues 419-452 (AGKNSKAEFQAPCRTTKYPREIPPLPWYRSAIPQ). A helical membrane pass occupies residues 453-473 (MAMAGFLPFSAIYIELYYIFA). At 474-485 (SVWGHRIYTIYS) the chain is on the lumenal side. The helical transmembrane segment at 486–506 (ILFIVFIILIIVTAFITVALT) threads the bilayer. Residues 507–521 (YFQLAAEDHQWWWRS) lie on the Cytoplasmic side of the membrane. The chain crosses the membrane as a helical span at residues 522–542 (FLCGGSTGLFIYAYCLYYYYA). The Lumenal portion of the chain corresponds to 543-553 (RSDMSGFMQTS). The chain crosses the membrane as a helical span at residues 554–574 (FFFGYMACICYGFFLMLGTVG). Residues 575–592 (FRAALLFVRHIYRSIKCE) lie on the Cytoplasmic side of the membrane. Positions 581–586 (FVRHIY) match the Endoplasmic reticulum export signal motif. The Golgi retention signal motif lies at 590 to 592 (KCE).

It belongs to the nonaspanin (TM9SF) (TC 9.A.2) family.

The protein localises to the endosome membrane. It is found in the golgi apparatus membrane. The chain is Transmembrane 9 superfamily member 2 from Arabidopsis thaliana (Mouse-ear cress).